The chain runs to 133 residues: Large ribosomal subunit protein bL17 (133 aa).

Belongs to the bacterial ribosomal protein bL17 family. Part of the 50S ribosomal subunit. Contacts protein L32.

This Pseudoalteromonas translucida (strain TAC 125) protein is Large ribosomal subunit protein bL17.